The primary structure comprises 170 residues: tRNA-splicing endonuclease (170 aa).

Active-site residues include Tyr-110, His-116, and Lys-147.

The protein belongs to the tRNA-intron endonuclease family. Archaeal short subfamily. As to quaternary structure, homotetramer; although the tetramer contains four active sites, only two participate in the cleavage. Therefore, it should be considered as a dimer of dimers.

It carries out the reaction pretRNA = a 3'-half-tRNA molecule with a 5'-OH end + a 5'-half-tRNA molecule with a 2',3'-cyclic phosphate end + an intron with a 2',3'-cyclic phosphate and a 5'-hydroxyl terminus.. Endonuclease that removes tRNA introns. Cleaves pre-tRNA at the 5'- and 3'-splice sites to release the intron. The products are an intron and two tRNA half-molecules bearing 2',3' cyclic phosphate and 5'-OH termini. Recognizes a pseudosymmetric substrate in which 2 bulged loops of 3 bases are separated by a stem of 4 bp. This chain is tRNA-splicing endonuclease, found in Pyrococcus horikoshii (strain ATCC 700860 / DSM 12428 / JCM 9974 / NBRC 100139 / OT-3).